A 703-amino-acid chain; its full sequence is Zinc finger protein 750 (703 aa).

The segment at 25–51 (YKCFQCPFTCNEKSHLFNHMKYGLCKN) adopts a CCHC-type zinc-finger fold. 4 residues coordinate Zn(2+): Cys27, Cys30, His43, and Cys49. Disordered regions lie at residues 64–113 (KCPK…DAKE), 350–527 (PASS…YGPM), 553–614 (WAPR…KQTA), and 630–703 (RVAD…TRVS). The span at 67 to 106 (KSSSLDPKQTHQPEPTSKPATSKSLLNGLSSFDPKSQQGS) shows a compositional bias: polar residues. Over residues 352–361 (SSPSELNLSS) the composition is skewed to low complexity. Residues 367-394 (TECEKGSPVPEAKDPSKDGQRDAEEAKM) show a composition bias toward basic and acidic residues. Polar residues-rich tracts occupy residues 410-421 (SPTNFTQTSQTF) and 456-477 (GSESPHSQPPANRTESPKSLQA). The segment covering 574-611 (TETKGSEDRTSRVETPQDKAHSRTTPDVHTEDSSDEQK) has biased composition (basic and acidic residues). Over residues 639–655 (QEPTRQDVPTLSATENL) the composition is skewed to polar residues.

The protein resides in the nucleus. Functionally, transcription factor involved in epidermis differentiation. Required for terminal epidermal differentiation: acts downstream of p63/TP63 and activates expression of late epidermal differentiation genes. Specifically binds to the promoter of KLF4 and promotes its expression. The chain is Zinc finger protein 750 (Znf750) from Mus musculus (Mouse).